Reading from the N-terminus, the 310-residue chain is Solute carrier family 25 member 47 (310 aa).

Solcar repeat units lie at residues 1-80 (MDFV…CLAH), 93-208 (PTKA…LCEW), and 217-304 (PDVL…VLRL). 6 consecutive transmembrane segments (helical) span residues 3–23 (FVAGAIGGVCGVAVGYPLDTV), 55–75 (GLSLPVCTVSLVSSVSFGTYH), 98–114 (ITLSGCASGLVRVFLTS), 194–210 (SFATYFLSYAMLCEWLT), 219–239 (VLGVLVAGGCAGVLAWAVATP), and 280–298 (LALNCCRAFPVNMVVFVAY).

It belongs to the mitochondrial carrier (TC 2.A.29) family. As to expression, specifically expressed in liver (at protein level).

It is found in the mitochondrion inner membrane. Its subcellular location is the mitochondrion outer membrane. It carries out the reaction NAD(+)(in) = NAD(+)(out). The catalysed reaction is acetyl-CoA(in) = acetyl-CoA(out). Its function is as follows. Mitochondrial NAD(+) transporter that acts as a 'metabolic gate' in hepatic lipogenesis. Provides NAD(+) substrate to mitochondrial SIRT3 deacetylase and enables its NAD(+)-dependent activities in mitochondrial energy metabolism. This triggers downstream activation of PRKAA1/AMPK-alpha signaling cascade that negatively regulates sterol regulatory element-binding protein (SREBP) transcriptional activities and ATP-consuming lipogenesis to restore cellular energy balance. May transport other mitochondrial metabolites having an aromatic nucleotide and phosphate groups, such as acetyl-CoA. Does not transport amino acids. The transport mechanism remains to be elucidated. This Mus musculus (Mouse) protein is Solute carrier family 25 member 47.